Reading from the N-terminus, the 471-residue chain is Eremophilane O-acetyltransferase ORF8 (471 aa).

Belongs to the fumigaclavine B O-acetyltransferase family. Monomer.

It participates in sesquiterpene biosynthesis. In terms of biological role, O-acetyltransferase; part of the gene cluster that mediates the biosynthesis of PR-toxin, a bicyclic sesquiterpene belonging to the eremophilane class and acting as a mycotoxin. The first step of the pathway is catalyzed by the aristolochene synthase which performs the cyclization of trans,trans-farnesyl diphosphate (FPP) to the bicyclic sesquiterpene aristolochene. Following the formation of aristolochene, the non-oxygenated aristolochene is converted to the trioxygenated intermediate eremofortin B, via 7-epi-neopetasone. This conversion appears to involve three enzymes, a hydroxysterol oxidase-like enzyme, the quinone-oxidase prx3 that forms the quinone-type-structure in the bicyclic nucleus of aristolochene with the C8-oxo group and the C-3 hydroxyl group, and the P450 monooxygenase ORF6 that introduces the epoxide at the double bond between carbons 1 and 2. No monoxy or dioxy-intermediates have been reported to be released to the broth, so these three early oxidative reactions may be coupled together. Eremofortin B is further oxidized by another P450 monooxygenase, that introduces a second epoxide between carbons 7 and 11 prior to acetylation to eremofortin A by the acetyltransferase ORF8. The second epoxidation may be performed by a second P450 monooxygenase. After the acetylation step, eremofortin A is converted to eremofortin C and then to PR-toxin. First the conversion of eremofortin A to eremofortin C proceeds by oxidation of the side chain of the molecule at C-12 and is catalyzed by the short-chain oxidoreductase prx1. The cytochrome P450 monooxygenase ORF6 is probably also involved in this step. The primary alcohol formed at C-12 is finally oxidized by the short-chain alcohol dehydrogenase prx4 that forms PR-toxin. The polypeptide is Eremophilane O-acetyltransferase ORF8 (Penicillium roqueforti (strain FM164)).